Consider the following 362-residue polypeptide: 3-isopropylmalate dehydrogenase (362 aa).

77–88 (GPKWGTGAVRPE) lines the NAD(+) pocket. Positions 95, 105, 134, and 223 each coordinate substrate. The Mg(2+) site is built by Asp223, Asp248, and Asp252. Residue 287–298 (GSAPDLPPNKVN) coordinates NAD(+).

Belongs to the isocitrate and isopropylmalate dehydrogenases family. In terms of assembly, homodimer. It depends on Mg(2+) as a cofactor. The cofactor is Mn(2+).

The protein resides in the cytoplasm. The catalysed reaction is (2R,3S)-3-isopropylmalate + NAD(+) = 4-methyl-2-oxopentanoate + CO2 + NADH. The protein operates within amino-acid biosynthesis; L-leucine biosynthesis; L-leucine from 3-methyl-2-oxobutanoate: step 3/4. In terms of biological role, catalyzes the oxidation of 3-carboxy-2-hydroxy-4-methylpentanoate (3-isopropylmalate) to 3-carboxy-4-methyl-2-oxopentanoate. The product decarboxylates to 4-methyl-2 oxopentanoate. This is 3-isopropylmalate dehydrogenase (LEU2) from Blastobotrys adeninivorans (Yeast).